The chain runs to 97 residues: Protein GLUTAMINE DUMPER 7 (97 aa).

The Extracellular segment spans residues 1–25; that stretch reads MSLHRDSMVPVNSRLENMDSPILSK. Residues 26–46 form a helical membrane-spanning segment; that stretch reads ICAWGVMLGLFALSLFAMAYA. Over 47 to 97 the chain is Cytoplasmic; sequence CYHKQTSNSCIEEKQGKKQVLKPLDMEPKIVVIMAGNENPTFFAKPTQINA. The VIMAG motif lies at 78 to 82; the sequence is VIMAG.

The protein belongs to the GLUTAMINE DUMPER 1 (TC 9.B.60) family. Expressed in the vascular tissues, even in the minor veins of the leaves.

The protein resides in the membrane. Probable subunit of an amino acid transporter involved in the regulation of the amino acid metabolism. Stimulates amino acid export by activating nonselective amino acid facilitators. In Arabidopsis thaliana (Mouse-ear cress), this protein is Protein GLUTAMINE DUMPER 7 (GDU7).